The following is a 239-amino-acid chain: Pyridoxine 5'-phosphate synthase (239 aa).

Residue N7 participates in 3-amino-2-oxopropyl phosphate binding. 9–10 is a binding site for 1-deoxy-D-xylulose 5-phosphate; sequence DH. R18 provides a ligand contact to 3-amino-2-oxopropyl phosphate. The active-site Proton acceptor is H43. Residues R45 and H50 each coordinate 1-deoxy-D-xylulose 5-phosphate. The active-site Proton acceptor is E70. A 1-deoxy-D-xylulose 5-phosphate-binding site is contributed by T100. Catalysis depends on H191, which acts as the Proton donor. 3-amino-2-oxopropyl phosphate is bound by residues G192 and 213–214; that span reads GH.

It belongs to the PNP synthase family. Homooctamer; tetramer of dimers.

The protein resides in the cytoplasm. It carries out the reaction 3-amino-2-oxopropyl phosphate + 1-deoxy-D-xylulose 5-phosphate = pyridoxine 5'-phosphate + phosphate + 2 H2O + H(+). The protein operates within cofactor biosynthesis; pyridoxine 5'-phosphate biosynthesis; pyridoxine 5'-phosphate from D-erythrose 4-phosphate: step 5/5. Functionally, catalyzes the complicated ring closure reaction between the two acyclic compounds 1-deoxy-D-xylulose-5-phosphate (DXP) and 3-amino-2-oxopropyl phosphate (1-amino-acetone-3-phosphate or AAP) to form pyridoxine 5'-phosphate (PNP) and inorganic phosphate. This is Pyridoxine 5'-phosphate synthase from Citrifermentans bemidjiense (strain ATCC BAA-1014 / DSM 16622 / JCM 12645 / Bem) (Geobacter bemidjiensis).